A 280-amino-acid chain; its full sequence is Shikimate dehydrogenase (NADP(+)) (280 aa).

Residues 20–22 (SRS) and Thr-67 contribute to the shikimate site. The Proton acceptor role is filled by Lys-71. Asp-82 contributes to the NADP(+) binding site. Shikimate contacts are provided by Asn-91 and Asp-106. Residues 131-135 (GAGGS) and Leu-220 contribute to the NADP(+) site. Tyr-222 serves as a coordination point for shikimate. Gly-243 contributes to the NADP(+) binding site.

This sequence belongs to the shikimate dehydrogenase family. Homodimer.

It catalyses the reaction shikimate + NADP(+) = 3-dehydroshikimate + NADPH + H(+). The protein operates within metabolic intermediate biosynthesis; chorismate biosynthesis; chorismate from D-erythrose 4-phosphate and phosphoenolpyruvate: step 4/7. In terms of biological role, involved in the biosynthesis of the chorismate, which leads to the biosynthesis of aromatic amino acids. Catalyzes the reversible NADPH linked reduction of 3-dehydroshikimate (DHSA) to yield shikimate (SA). The polypeptide is Shikimate dehydrogenase (NADP(+)) (Rhodopseudomonas palustris (strain HaA2)).